A 767-amino-acid chain; its full sequence is 5-methyltetrahydropteroyltriglutamate--homocysteine methyltransferase (767 aa).

Positions 19 and 126 each coordinate 5-methyltetrahydropteroyltri-L-glutamate. L-homocysteine is bound by residues 446-448 and E499; that span reads IGS. L-methionine is bound by residues 446–448 and E499; that span reads IGS. 5-methyltetrahydropteroyltri-L-glutamate-binding positions include D504, Y527, 530-531, and W576; that span reads RY. D614 is an L-homocysteine binding site. Residue D614 participates in L-methionine binding. Residues H657, C659, and E679 each coordinate Zn(2+). H707 (proton donor) is an active-site residue. C739 lines the Zn(2+) pocket.

It belongs to the vitamin-B12 independent methionine synthase family. Requires Zn(2+) as cofactor.

It carries out the reaction 5-methyltetrahydropteroyltri-L-glutamate + L-homocysteine = tetrahydropteroyltri-L-glutamate + L-methionine. It functions in the pathway amino-acid biosynthesis; L-methionine biosynthesis via de novo pathway; L-methionine from L-homocysteine (MetE route): step 1/1. Inhibited weakly by methotrexate. Catalyzes the transfer of a methyl group from 5-methyltetrahydrofolate to homocysteine resulting in methionine formation. This Candida albicans (strain SC5314 / ATCC MYA-2876) (Yeast) protein is 5-methyltetrahydropteroyltriglutamate--homocysteine methyltransferase.